Reading from the N-terminus, the 647-residue chain is Endogenous retrovirus group K member 8 Gag polyprotein (647 aa).

A lipid anchor (N-myristoyl glycine) is attached at Gly2. Residues 165 to 264 (GKGPELVGPS…APPSRQGSEL (100 aa)) form a disordered region. Positions 232–247 (GMPPAPQGREPYPQPP) are enriched in pro residues. CCHC-type zinc fingers lie at residues 544-561 (GKCY…NCPV) and 580-597 (DLCP…QCRS). Residues 598-641 (KFDKNGQPLSGNEQRGQPQAPQQTGAFPIQPFVPQGFQDNNPHC) are disordered. Polar residues predominate over residues 604–622 (QPLSGNEQRGQPQAPQQTG).

It belongs to the beta type-B retroviral Gag protein family. HERV class-II K(HML-2) gag subfamily. Post-translationally, myristoylation is essential for retroviral assembly. Alteration of the glycine residue leads to a block in the budding of particles and an accumulation of Gag inside the cell. Specific enzymatic cleavages may yield mature proteins.

It localises to the cell membrane. Functionally, the products of the Gag polyproteins of infectious retroviruses perform highly complex orchestrated tasks during the assembly, budding, maturation, and infection stages of the viral replication cycle. During viral assembly, the proteins form membrane associations and self-associations that ultimately result in budding of an immature virion from the infected cell. Gag precursors also function during viral assembly to selectively bind and package two plus strands of genomic RNA. Endogenous Gag proteins may have kept, lost or modified their original function during evolution. In Homo sapiens (Human), this protein is Endogenous retrovirus group K member 8 Gag polyprotein (ERVK-8).